A 239-amino-acid polypeptide reads, in one-letter code: 2,3,4,5-tetrahydropyridine-2,6-dicarboxylate N-acetyltransferase (239 aa).

This sequence belongs to the transferase hexapeptide repeat family. DapH subfamily.

It carries out the reaction (S)-2,3,4,5-tetrahydrodipicolinate + acetyl-CoA + H2O = L-2-acetamido-6-oxoheptanedioate + CoA. It functions in the pathway amino-acid biosynthesis; L-lysine biosynthesis via DAP pathway; LL-2,6-diaminopimelate from (S)-tetrahydrodipicolinate (acetylase route): step 1/3. In terms of biological role, catalyzes the transfer of an acetyl group from acetyl-CoA to tetrahydrodipicolinate. This is 2,3,4,5-tetrahydropyridine-2,6-dicarboxylate N-acetyltransferase from Staphylococcus aureus (strain bovine RF122 / ET3-1).